Reading from the N-terminus, the 24-residue chain is Carboxypeptidase 1 (24 aa).

Asn3 and Asn11 each carry an N-linked (GlcNAc...) asparagine glycan.

Belongs to the peptidase S10 family. Monomer. Post-translationally, contains both N- and O-linked sugar chains. The N-linked oligosaccharides are unique structures of Man(10)GlcNAc(2) and Man(11)GlcNAc(2). Deglycosylation does neither affect catalytic activity, pH, thermal stability, or resistance to proteolysis of the enzyme.

The protein resides in the secreted. Inhibited by DFP. Functionally, removes acidic, neutral and basic amino acids as well as proline from the C-terminal position. Digests preferentially peptides containing a hydrophobic residue in P1' position, as well as arginine, lysine or phenylalanine in P1 position of ester substrate. Catalyzes also peptide synthesis. The polypeptide is Carboxypeptidase 1 (Aspergillus niger).